Reading from the N-terminus, the 579-residue chain is Mitochondrial distribution and morphology protein 36 (579 aa).

A disordered region spans residues 1–27 (MDENGTVKPGYELKGLNSGNSRSNMDK). Serine 42 carries the post-translational modification Phosphoserine. 2 disordered regions span residues 378 to 401 (TPIN…GRRL) and 446 to 518 (DNKH…ESQS). Residues 379 to 390 (PINSSDSDNLSN) are compositionally biased toward polar residues. The span at 446-463 (DNKHSTKDTDSNIRRNEH) shows a compositional bias: basic and acidic residues. The span at 495–518 (PSQSSSRMSTLPLSPSSSLLESQS) shows a compositional bias: low complexity.

Functionally, involved in mitochondrial distribution and morphology. This is Mitochondrial distribution and morphology protein 36 (MDM36) from Saccharomyces cerevisiae (strain ATCC 204508 / S288c) (Baker's yeast).